The primary structure comprises 80 residues: UPF0270 protein ASA_3305 (80 aa).

Belongs to the UPF0270 family.

This chain is UPF0270 protein ASA_3305, found in Aeromonas salmonicida (strain A449).